The primary structure comprises 144 residues: Ribonuclease H (144 aa).

The RNase H type-1 domain maps to M1–E141. Positions 9, 47, 69, and 133 each coordinate Mg(2+).

Belongs to the RNase H family. Monomer. Mg(2+) is required as a cofactor.

It localises to the cytoplasm. It catalyses the reaction Endonucleolytic cleavage to 5'-phosphomonoester.. In terms of biological role, endonuclease that specifically degrades the RNA of RNA-DNA hybrids. The polypeptide is Ribonuclease H (Janthinobacterium sp. (strain Marseille) (Minibacterium massiliensis)).